The following is a 160-amino-acid chain: S-ribosylhomocysteine lyase (160 aa).

Positions 57, 61, and 127 each coordinate Fe cation.

This sequence belongs to the LuxS family. In terms of assembly, homodimer. Fe cation is required as a cofactor.

The catalysed reaction is S-(5-deoxy-D-ribos-5-yl)-L-homocysteine = (S)-4,5-dihydroxypentane-2,3-dione + L-homocysteine. Its function is as follows. Involved in the synthesis of autoinducer 2 (AI-2) which is secreted by bacteria and is used to communicate both the cell density and the metabolic potential of the environment. The regulation of gene expression in response to changes in cell density is called quorum sensing. Catalyzes the transformation of S-ribosylhomocysteine (RHC) to homocysteine (HC) and 4,5-dihydroxy-2,3-pentadione (DPD). This Streptococcus suis (strain 98HAH33) protein is S-ribosylhomocysteine lyase.